Here is a 488-residue protein sequence, read N- to C-terminus: Glutamyl-tRNA(Gln) amidotransferase subunit A (488 aa).

Catalysis depends on charge relay system residues lysine 77 and serine 152. Serine 176 acts as the Acyl-ester intermediate in catalysis.

It belongs to the amidase family. GatA subfamily. Heterotrimer of A, B and C subunits.

It carries out the reaction L-glutamyl-tRNA(Gln) + L-glutamine + ATP + H2O = L-glutaminyl-tRNA(Gln) + L-glutamate + ADP + phosphate + H(+). Allows the formation of correctly charged Gln-tRNA(Gln) through the transamidation of misacylated Glu-tRNA(Gln) in organisms which lack glutaminyl-tRNA synthetase. The reaction takes place in the presence of glutamine and ATP through an activated gamma-phospho-Glu-tRNA(Gln). This chain is Glutamyl-tRNA(Gln) amidotransferase subunit A, found in Streptococcus mutans serotype c (strain ATCC 700610 / UA159).